We begin with the raw amino-acid sequence, 505 residues long: 11S globulin seed storage protein 1 (505 aa).

An N-terminal signal peptide occupies residues 1 to 24 (MAKPILLSIYLCLIIVALFNGCLA). Cystine bridges form between C37-C70 and C113-C323. The Cupin type-1 1 domain maps to 42-255 (LDALEPTNRI…AFNVDTETAR (214 aa)). 3 igE-binding regions span residues 118-132 (EESQ…RREF), 208-219 (EQHRRQQQHQQR), and 238-249 (FDAEFLADAFNV). Positions 193–232 (GNPDDEFRPQGQQEYEQHRRQQQHQQRRGEHGEQQRDLGN) are disordered. The segment covering 219-228 (RRGEHGEQQR) has biased composition (basic and acidic residues). A compositionally biased stretch (basic and acidic residues) spans 282-316 (WSREEQEHEERKERERERESESERRQSRRGGRDDN). Residues 282 to 318 (WSREEQEHEERKERERERESESERRQSRRGGRDDNGL) are disordered. The NGXEET; peptidase recognition motif signature appears at 316–321 (NGLEET). The region spanning 329-478 (ENIGDPSRAD…AFQIPREDAR (150 aa)) is the Cupin type-1 2 domain.

This sequence belongs to the 11S seed storage protein (globulins) family. In terms of assembly, homohexamer. Each subunit is composed of an acidic and a basic chain derived from a single precursor and linked by a disulfide bond. Expressed in seeds (at protein level). Expressed in seeds.

Functionally, seed storage protein. This is 11S globulin seed storage protein 1 from Carya illinoinensis (Pecan).